Consider the following 111-residue polypeptide: Ribosome-binding factor A (111 aa).

The protein belongs to the RbfA family. As to quaternary structure, monomer. Binds 30S ribosomal subunits, but not 50S ribosomal subunits or 70S ribosomes.

Its subcellular location is the cytoplasm. One of several proteins that assist in the late maturation steps of the functional core of the 30S ribosomal subunit. Associates with free 30S ribosomal subunits (but not with 30S subunits that are part of 70S ribosomes or polysomes). Required for efficient processing of 16S rRNA. May interact with the 5'-terminal helix region of 16S rRNA. The sequence is that of Ribosome-binding factor A from Helicobacter pylori (strain G27).